A 210-amino-acid chain; its full sequence is Chaperone protein TorD (210 aa).

The protein belongs to the TorD/DmsD family. TorD subfamily.

Its subcellular location is the cytoplasm. In terms of biological role, involved in the biogenesis of TorA. Acts on TorA before the insertion of the molybdenum cofactor and, as a result, probably favors a conformation of the apoenzyme that is competent for acquiring the cofactor. This Salmonella schwarzengrund (strain CVM19633) protein is Chaperone protein TorD.